A 77-amino-acid polypeptide reads, in one-letter code: MSQKSYIVQLKDSVDPASMDKIKSDLEASGAKIGHTYDTVFKGFSVSLPENAVDALSAHPEIQHFEPDQEMHTMKKD.

One can recognise an Inhibitor I9 domain in the interval 5–74 (SYIVQLKDSV…FEPDQEMHTM (70 aa)).

The protein belongs to the protease inhibitor I9 family.

It localises to the cytoplasm. The protein resides in the nucleus. This is an uncharacterized protein from Schizosaccharomyces pombe (strain 972 / ATCC 24843) (Fission yeast).